Reading from the N-terminus, the 506-residue chain is DEAD-box ATP-dependent RNA helicase CshA (506 aa).

The short motif at 2–30 is the Q motif element; it reads QNFKELGISDNTVQSLESMGFKEPTPIQK. The 171-residue stretch at 33–203 folds into the Helicase ATP-binding domain; sequence IPYALQGIDI…QQFMKSPKII (171 aa). ATP is bound at residue 46–53; that stretch reads AQTGTGKT. Residues 150 to 153 carry the DEAD box motif; that stretch reads DEAD. A Helicase C-terminal domain is found at 214 to 375; that stretch reads QIEEFYTIVK…LRPPHRKEVL (162 aa). The segment at 436–506 is disordered; sequence EKPLSRKGRN…KGRTFADHQK (71 aa). Basic residues predominate over residues 468–480; that stretch reads KRSKGYSSKKKST.

This sequence belongs to the DEAD box helicase family. CshA subfamily. As to quaternary structure, oligomerizes, may be a member of the RNA degradosome.

Its subcellular location is the cytoplasm. It catalyses the reaction ATP + H2O = ADP + phosphate + H(+). DEAD-box RNA helicase possibly involved in RNA degradation. Unwinds dsRNA in both 5'- and 3'-directions, has RNA-dependent ATPase activity. The sequence is that of DEAD-box ATP-dependent RNA helicase CshA from Staphylococcus aureus (strain MW2).